Reading from the N-terminus, the 49-residue chain is Large ribosomal subunit protein bL33 (49 aa).

Belongs to the bacterial ribosomal protein bL33 family.

This Syntrophomonas wolfei subsp. wolfei (strain DSM 2245B / Goettingen) protein is Large ribosomal subunit protein bL33.